Reading from the N-terminus, the 216-residue chain is GTPase IMAP family member GIMD1 (216 aa).

An AIG1-type G domain is found at 5-216; sequence KMTINLALFG…ENCYQVLTFK (212 aa). Residues 14–22, S35, and 147–149 each bind GTP; these read GMTQSGKSS and HAE.

This sequence belongs to the TRAFAC class TrmE-Era-EngA-EngB-Septin-like GTPase superfamily. AIG1/Toc34/Toc159-like paraseptin GTPase family. IAN subfamily.

The sequence is that of GTPase IMAP family member GIMD1 (GIMD1) from Bos taurus (Bovine).